Consider the following 574-residue polypeptide: Methionine--tRNA ligase (574 aa).

A 'HIGH' region motif is present at residues Pro-11–Asn-21. 4 residues coordinate Zn(2+): Cys-143, Cys-146, Cys-156, and Cys-159. The 'KMSKS' region motif lies at Lys-345–Ser-349. Thr-348 serves as a coordination point for ATP.

The protein belongs to the class-I aminoacyl-tRNA synthetase family. MetG type 1 subfamily. Monomer. The cofactor is Zn(2+).

Its subcellular location is the cytoplasm. The catalysed reaction is tRNA(Met) + L-methionine + ATP = L-methionyl-tRNA(Met) + AMP + diphosphate. Functionally, is required not only for elongation of protein synthesis but also for the initiation of all mRNA translation through initiator tRNA(fMet) aminoacylation. The sequence is that of Methionine--tRNA ligase from Streptomyces avermitilis (strain ATCC 31267 / DSM 46492 / JCM 5070 / NBRC 14893 / NCIMB 12804 / NRRL 8165 / MA-4680).